The primary structure comprises 188 residues: Ribosome-recycling factor (188 aa).

This sequence belongs to the RRF family.

Its subcellular location is the cytoplasm. Its function is as follows. Responsible for the release of ribosomes from messenger RNA at the termination of protein biosynthesis. May increase the efficiency of translation by recycling ribosomes from one round of translation to another. The protein is Ribosome-recycling factor of Anaeromyxobacter dehalogenans (strain 2CP-1 / ATCC BAA-258).